The chain runs to 377 residues: Succinyl-diaminopimelate desuccinylase (377 aa).

Residue His68 coordinates Zn(2+). Residue Asp70 is part of the active site. Zn(2+) is bound at residue Asp101. Residue Glu135 is the Proton acceptor of the active site. Zn(2+)-binding residues include Glu136, Glu164, and His350.

This sequence belongs to the peptidase M20A family. DapE subfamily. Homodimer. Zn(2+) serves as cofactor. It depends on Co(2+) as a cofactor.

The catalysed reaction is N-succinyl-(2S,6S)-2,6-diaminopimelate + H2O = (2S,6S)-2,6-diaminopimelate + succinate. Its pathway is amino-acid biosynthesis; L-lysine biosynthesis via DAP pathway; LL-2,6-diaminopimelate from (S)-tetrahydrodipicolinate (succinylase route): step 3/3. Functionally, catalyzes the hydrolysis of N-succinyl-L,L-diaminopimelic acid (SDAP), forming succinate and LL-2,6-diaminopimelate (DAP), an intermediate involved in the bacterial biosynthesis of lysine and meso-diaminopimelic acid, an essential component of bacterial cell walls. This Aliivibrio salmonicida (strain LFI1238) (Vibrio salmonicida (strain LFI1238)) protein is Succinyl-diaminopimelate desuccinylase.